The sequence spans 136 residues: Small ribosomal subunit protein uS8c (136 aa).

The protein belongs to the universal ribosomal protein uS8 family. Part of the 30S ribosomal subunit.

It is found in the plastid. The protein resides in the chloroplast. In terms of biological role, one of the primary rRNA binding proteins, it binds directly to 16S rRNA central domain where it helps coordinate assembly of the platform of the 30S subunit. This Tetradesmus obliquus (Green alga) protein is Small ribosomal subunit protein uS8c (rps8).